Consider the following 103-residue polypeptide: Large ribosomal subunit protein uL24 (103 aa).

This sequence belongs to the universal ribosomal protein uL24 family. Part of the 50S ribosomal subunit.

One of two assembly initiator proteins, it binds directly to the 5'-end of the 23S rRNA, where it nucleates assembly of the 50S subunit. Functionally, one of the proteins that surrounds the polypeptide exit tunnel on the outside of the subunit. This Haemophilus influenzae (strain PittEE) protein is Large ribosomal subunit protein uL24.